Consider the following 242-residue polypeptide: Ubiquinone biosynthesis O-methyltransferase (242 aa).

S-adenosyl-L-methionine is bound by residues Arg44, Gly64, Asp85, and Met129.

The protein belongs to the methyltransferase superfamily. UbiG/COQ3 family.

The catalysed reaction is a 3-demethylubiquinol + S-adenosyl-L-methionine = a ubiquinol + S-adenosyl-L-homocysteine + H(+). The enzyme catalyses a 3-(all-trans-polyprenyl)benzene-1,2-diol + S-adenosyl-L-methionine = a 2-methoxy-6-(all-trans-polyprenyl)phenol + S-adenosyl-L-homocysteine + H(+). The protein operates within cofactor biosynthesis; ubiquinone biosynthesis. O-methyltransferase that catalyzes the 2 O-methylation steps in the ubiquinone biosynthetic pathway. The protein is Ubiquinone biosynthesis O-methyltransferase of Salmonella choleraesuis (strain SC-B67).